A 283-amino-acid polypeptide reads, in one-letter code: Diaminopimelate epimerase (283 aa).

The substrate site is built by Asn13, Gln45, and Asn65. The Proton donor role is filled by Cys74. Substrate contacts are provided by residues 75 to 76 (GN), Asn156, Asn190, and 208 to 209 (ER). The active-site Proton acceptor is Cys217. 218–219 (GS) is a binding site for substrate.

The protein belongs to the diaminopimelate epimerase family. As to quaternary structure, homodimer.

It localises to the cytoplasm. It carries out the reaction (2S,6S)-2,6-diaminopimelate = meso-2,6-diaminopimelate. It participates in amino-acid biosynthesis; L-lysine biosynthesis via DAP pathway; DL-2,6-diaminopimelate from LL-2,6-diaminopimelate: step 1/1. Functionally, catalyzes the stereoinversion of LL-2,6-diaminopimelate (L,L-DAP) to meso-diaminopimelate (meso-DAP), a precursor of L-lysine and an essential component of the bacterial peptidoglycan. This chain is Diaminopimelate epimerase, found in Bartonella henselae (strain ATCC 49882 / DSM 28221 / CCUG 30454 / Houston 1) (Rochalimaea henselae).